Reading from the N-terminus, the 330-residue chain is Ketol-acid reductoisomerase (NADP(+)) (330 aa).

A KARI N-terminal Rossmann domain is found at 2–181; that stretch reads AKVYYDNDVN…GATRAGVIET (180 aa). Residues 25–28, arginine 48, serine 52, and 82–85 each bind NADP(+); these read YGSQ and DEVQ. The active site involves histidine 107. Glycine 133 contacts NADP(+). The KARI C-terminal knotted domain occupies 182–327; sequence TFKEETETDL…ADLRMMMPFI (146 aa). 4 residues coordinate Mg(2+): aspartate 190, glutamate 194, glutamate 226, and glutamate 230. A substrate-binding site is contributed by serine 251.

Belongs to the ketol-acid reductoisomerase family. Mg(2+) serves as cofactor.

It catalyses the reaction (2R)-2,3-dihydroxy-3-methylbutanoate + NADP(+) = (2S)-2-acetolactate + NADPH + H(+). The enzyme catalyses (2R,3R)-2,3-dihydroxy-3-methylpentanoate + NADP(+) = (S)-2-ethyl-2-hydroxy-3-oxobutanoate + NADPH + H(+). It functions in the pathway amino-acid biosynthesis; L-isoleucine biosynthesis; L-isoleucine from 2-oxobutanoate: step 2/4. The protein operates within amino-acid biosynthesis; L-valine biosynthesis; L-valine from pyruvate: step 2/4. In terms of biological role, involved in the biosynthesis of branched-chain amino acids (BCAA). Catalyzes an alkyl-migration followed by a ketol-acid reduction of (S)-2-acetolactate (S2AL) to yield (R)-2,3-dihydroxy-isovalerate. In the isomerase reaction, S2AL is rearranged via a Mg-dependent methyl migration to produce 3-hydroxy-3-methyl-2-ketobutyrate (HMKB). In the reductase reaction, this 2-ketoacid undergoes a metal-dependent reduction by NADPH to yield (R)-2,3-dihydroxy-isovalerate. This is Ketol-acid reductoisomerase (NADP(+)) from Macrococcus caseolyticus (strain JCSC5402) (Macrococcoides caseolyticum).